A 295-amino-acid polypeptide reads, in one-letter code: tRNA pseudouridine synthase A (295 aa).

D67 functions as the Nucleophile in the catalytic mechanism. A substrate-binding site is contributed by Y125.

This sequence belongs to the tRNA pseudouridine synthase TruA family. In terms of assembly, homodimer.

The catalysed reaction is uridine(38/39/40) in tRNA = pseudouridine(38/39/40) in tRNA. Formation of pseudouridine at positions 38, 39 and 40 in the anticodon stem and loop of transfer RNAs. This chain is tRNA pseudouridine synthase A, found in Prochlorococcus marinus (strain MIT 9303).